Consider the following 1051-residue polypeptide: Anucleate primary sterigmata protein B (1051 aa).

Coiled coils occupy residues 10-200 (IDRL…YAIA) and 239-285 (STLV…ELKL). A compositionally biased stretch (basic and acidic residues) spans 58-90 (KDNQGLKRKIRDLEKQLKDQQSDKESMLNHDPE). 2 disordered regions span residues 58-100 (KDNQ…DRDH) and 141-160 (LKSL…REER). A compositionally biased stretch (basic and acidic residues) spans 294–303 (AGDSILDRSA). 4 disordered regions span residues 294–329 (AGDS…AERE), 877–902 (NHPR…LAER), 909–928 (NTAA…QMTN), and 984–1051 (EERD…DIEV). Polar residues predominate over residues 309 to 321 (RPSSSISDRTGQS). 2 coiled-coil regions span residues 325–743 (DAER…RNSM) and 787–878 (RNLL…LQNH). Composition is skewed to polar residues over residues 877 to 897 (NHPR…SSTI) and 916 to 928 (ARSS…QMTN). A coiled-coil region spans residues 950-1004 (NQEVWIKRLHELERRLKAEREARLLDRNGARRRLEERDAENKRLRAQLDRQRLRQ). 2 stretches are compositionally biased toward basic and acidic residues: residues 984-1001 (EERD…DRQR) and 1028-1040 (EGYR…HSSS).

It is found in the cytoplasm. In terms of biological role, involved in regulation of nuclear migration. May be involved in regulating nuclear positioning. The sequence is that of Anucleate primary sterigmata protein B (apsB) from Emericella nidulans (strain FGSC A4 / ATCC 38163 / CBS 112.46 / NRRL 194 / M139) (Aspergillus nidulans).